The chain runs to 80 residues: Protein FAM229B (80 aa).

The segment at 1–44 (MPFRFGTQPRRFPVEGGDSSIGLEPGLSSSAACNGKEMSPTRQL) is disordered.

It belongs to the FAM229 family.

This chain is Protein FAM229B (FAM229B), found in Macaca fascicularis (Crab-eating macaque).